A 331-amino-acid polypeptide reads, in one-letter code: Histone-lysine N-methyltransferase, H3 lysine-9 specific dim-5 (331 aa).

The region spanning 77–159 (VGCSCASDEE…DCPNRVVERG (83 aa)) is the Pre-SET domain. Positions 79, 81, 87, 92, 94, 141, 145, 147, and 151 each coordinate Zn(2+). The SET domain maps to 162-297 (VPLQIFRTKD…KGTELTFDYV (136 aa)). Residues 172-174 (RGW), aspartate 215, tyrosine 217, arginine 251, and 254-255 (NH) each bind S-adenosyl-L-methionine. The Zn(2+) site is built by cysteine 257, cysteine 319, cysteine 321, and cysteine 326. A Post-SET domain is found at 315–331 (EMTKCLCGTAKCRGYLW).

Belongs to the class V-like SAM-binding methyltransferase superfamily. Histone-lysine methyltransferase family. Suvar3-9 subfamily.

The protein localises to the nucleus. The protein resides in the chromosome. It catalyses the reaction L-lysyl(9)-[histone H3] + 3 S-adenosyl-L-methionine = N(6),N(6),N(6)-trimethyl-L-lysyl(9)-[histone H3] + 3 S-adenosyl-L-homocysteine + 3 H(+). Its function is as follows. Histone methyltransferase that specifically trimethylates histone H3 to form H3K9me3. H3K9me3 marks chromatin regions for DNA methylation. Dim-5 recognizes Arg-8 to Gly-12 of the H3 tail with Thr-11 and Gly-12 being the most important specificity determinants, the recognition of whcih is important to distinguish H3K9 from H3K27 and H4K20. The sequence is that of Histone-lysine N-methyltransferase, H3 lysine-9 specific dim-5 (dim-5) from Neurospora crassa (strain ATCC 24698 / 74-OR23-1A / CBS 708.71 / DSM 1257 / FGSC 987).